Here is an 818-residue protein sequence, read N- to C-terminus: MAIDNGKLQEEEASSVTRFYNIILGWDYKQLTKENERKNRKDSKEKLNVVKNTYKDVDDYFETFEPLLFEEVKAQILQNKDGEEASVCKMRLVMECNEGEGFHFLLVTYEHEEDEYLAQNDLLLLSKEEVKGNSFPSSYGFAVVEHRQNNLLRLRMYLAEDIVQITKNTKSSRTKSFIQALSNMRSLITSSASPIDKRVFSLKLCGLSTIIREYIALRSVSSLPFKDLIFTAAEKSCGFGDEAWKISGPLNEFFNENLNKSQKEAIDVGLSRKSFVLIQGPPGTGKTQTILSILGAIMHATPARVQSKGTDHEVKRGIQMTIQEKYNHWGRASPWILGVNPRDAIMPEDGDDGFFPTSGNELKPEVVNASRKYRLRVLVCAPSNSALDEIVLRLLSSGLRDENAQTYTPKIVRIGLKAHHSVASVSLDHLVAQKRGSAIDKPKQGTTGTDIDSIRTAILEEAAIVFATLSFSGSALLAKSNRGFDVVIIDEAAQAVEPATLIPLATRCKQVFLVGDPKQLPATVISTVAQDSGYGTSMFERLQKAGYPVKMLKTQYRMHPEIRSFPSKQFYEGALEDGSDIEAQTTRDWHKYRCFGPFCFFDIHEGKESQHPGATGSRVNLDEVEFVLLIYHRLVTMYPELKSSSQLAIISPYNYQVKTFKDRFKEMFGTEAEKVVDINTVDGFQGREKDVAIFSCVRANENGQIGFLSNSRRMNVGITRAKSSVLVVGSAATLKSDPLWKNLIESAEQRNRLFKVSKPLNNFFSEENLETMKLTEDMEIPDAPLYEDESLPVAPYGGDDDFGDGDADQDDVAMAGED.

Residues 259-559 enclose the UvrD-like helicase ATP-binding domain; that stretch reads NKSQKEAIDV…KMLKTQYRMH (301 aa). 280-287 provides a ligand contact to ATP; sequence GPPGTGKT. 2 stretches are compositionally biased toward acidic residues: residues 781–790 and 798–818; these read PDAPLYEDES and GDDD…AGED. Positions 781 to 818 are disordered; that stretch reads PDAPLYEDESLPVAPYGGDDDFGDGDADQDDVAMAGED.

The protein belongs to the helicase family. In terms of tissue distribution, expressed in flowers, siliques, leaves, roots and shoot apex.

It localises to the nucleus. Functionally, probable helicase that may regulate RNA molecules involved in nucleolar organization and pollen tube guidance. This chain is Probable helicase MAGATAMA 3 (MAA3), found in Arabidopsis thaliana (Mouse-ear cress).